Here is a 437-residue protein sequence, read N- to C-terminus: Trigger factor (437 aa).

Positions 161–246 constitute a PPIase FKBP-type domain; that stretch reads DDQVNIDFVG…VNSVSAPQLP (86 aa).

This sequence belongs to the FKBP-type PPIase family. Tig subfamily.

Its subcellular location is the cytoplasm. It carries out the reaction [protein]-peptidylproline (omega=180) = [protein]-peptidylproline (omega=0). Functionally, involved in protein export. Acts as a chaperone by maintaining the newly synthesized protein in an open conformation. Functions as a peptidyl-prolyl cis-trans isomerase. This chain is Trigger factor, found in Pseudomonas putida (strain W619).